Here is a 53-residue protein sequence, read N- to C-terminus: Conotoxin Cal9.2f (53 aa).

The propeptide occupies 1–6; the sequence is KKGVTL. Disulfide bonds link Cys15–Cys32, Cys20–Cys42, and Cys22–Cys47.

As to expression, expressed by the venom duct.

The protein resides in the secreted. Functionally, probable neurotoxin with unknown target. Possibly targets ion channels. This chain is Conotoxin Cal9.2f, found in Californiconus californicus (California cone).